Here is a 379-residue protein sequence, read N- to C-terminus: Succinyl-diaminopimelate desuccinylase (379 aa).

Position 70 (histidine 70) interacts with Zn(2+). Residue aspartate 72 is part of the active site. Aspartate 103 is a binding site for Zn(2+). Catalysis depends on glutamate 137, which acts as the Proton acceptor. Glutamate 138, glutamate 166, and histidine 352 together coordinate Zn(2+).

The protein belongs to the peptidase M20A family. DapE subfamily. As to quaternary structure, homodimer. The cofactor is Zn(2+). It depends on Co(2+) as a cofactor.

The catalysed reaction is N-succinyl-(2S,6S)-2,6-diaminopimelate + H2O = (2S,6S)-2,6-diaminopimelate + succinate. Its pathway is amino-acid biosynthesis; L-lysine biosynthesis via DAP pathway; LL-2,6-diaminopimelate from (S)-tetrahydrodipicolinate (succinylase route): step 3/3. Catalyzes the hydrolysis of N-succinyl-L,L-diaminopimelic acid (SDAP), forming succinate and LL-2,6-diaminopimelate (DAP), an intermediate involved in the bacterial biosynthesis of lysine and meso-diaminopimelic acid, an essential component of bacterial cell walls. The protein is Succinyl-diaminopimelate desuccinylase of Shewanella putrefaciens (strain CN-32 / ATCC BAA-453).